Consider the following 273-residue polypeptide: 4-hydroxy-tetrahydrodipicolinate reductase (273 aa).

12–17 (GAMGRM) lines the NAD(+) pocket. Lys-39 contacts NADP(+). Residues 102 to 104 (GTT) and 126 to 129 (ASNF) each bind NAD(+). His-159 serves as the catalytic Proton donor/acceptor. His-160 is a binding site for (S)-2,3,4,5-tetrahydrodipicolinate. The active-site Proton donor is the Lys-163. 169 to 170 (GT) contributes to the (S)-2,3,4,5-tetrahydrodipicolinate binding site.

It belongs to the DapB family. Homotetramer.

The protein resides in the cytoplasm. It catalyses the reaction (S)-2,3,4,5-tetrahydrodipicolinate + NAD(+) + H2O = (2S,4S)-4-hydroxy-2,3,4,5-tetrahydrodipicolinate + NADH + H(+). The enzyme catalyses (S)-2,3,4,5-tetrahydrodipicolinate + NADP(+) + H2O = (2S,4S)-4-hydroxy-2,3,4,5-tetrahydrodipicolinate + NADPH + H(+). The protein operates within amino-acid biosynthesis; L-lysine biosynthesis via DAP pathway; (S)-tetrahydrodipicolinate from L-aspartate: step 4/4. Its function is as follows. Catalyzes the conversion of 4-hydroxy-tetrahydrodipicolinate (HTPA) to tetrahydrodipicolinate. This Buchnera aphidicola subsp. Schizaphis graminum (strain Sg) protein is 4-hydroxy-tetrahydrodipicolinate reductase.